A 365-amino-acid polypeptide reads, in one-letter code: tRNA/tmRNA (uracil-C(5))-methyltransferase (365 aa).

Glutamine 189, tyrosine 217, asparagine 222, glutamate 238, and aspartate 298 together coordinate S-adenosyl-L-methionine. The active-site Nucleophile is cysteine 323. Glutamate 357 serves as the catalytic Proton acceptor.

Belongs to the class I-like SAM-binding methyltransferase superfamily. RNA M5U methyltransferase family. TrmA subfamily.

The catalysed reaction is uridine(54) in tRNA + S-adenosyl-L-methionine = 5-methyluridine(54) in tRNA + S-adenosyl-L-homocysteine + H(+). It carries out the reaction uridine(341) in tmRNA + S-adenosyl-L-methionine = 5-methyluridine(341) in tmRNA + S-adenosyl-L-homocysteine + H(+). Functionally, dual-specificity methyltransferase that catalyzes the formation of 5-methyluridine at position 54 (m5U54) in all tRNAs, and that of position 341 (m5U341) in tmRNA (transfer-mRNA). This chain is tRNA/tmRNA (uracil-C(5))-methyltransferase, found in Shewanella sp. (strain MR-4).